Consider the following 473-residue polypeptide: Inactive levansucrase (473 aa).

Residues 1-29 (MNIKKFAKQATVLTFTTALLAGGATQAFA) form the signal peptide.

Belongs to the glycosyl hydrolase 68 family.

Its subcellular location is the secreted. The sequence is that of Inactive levansucrase (sacB) from Geobacillus stearothermophilus (Bacillus stearothermophilus).